The sequence spans 424 residues: Serine--tRNA ligase (424 aa).

Residue 230–232 (TSE) coordinates L-serine. ATP-binding positions include 261 to 263 (RKE) and Val-277. Glu-284 is an L-serine binding site. 348–351 (ELTS) serves as a coordination point for ATP. Thr-382 contacts L-serine.

This sequence belongs to the class-II aminoacyl-tRNA synthetase family. Type-1 seryl-tRNA synthetase subfamily. In terms of assembly, homodimer. The tRNA molecule binds across the dimer.

It is found in the cytoplasm. It carries out the reaction tRNA(Ser) + L-serine + ATP = L-seryl-tRNA(Ser) + AMP + diphosphate + H(+). It catalyses the reaction tRNA(Sec) + L-serine + ATP = L-seryl-tRNA(Sec) + AMP + diphosphate + H(+). The protein operates within aminoacyl-tRNA biosynthesis; selenocysteinyl-tRNA(Sec) biosynthesis; L-seryl-tRNA(Sec) from L-serine and tRNA(Sec): step 1/1. Catalyzes the attachment of serine to tRNA(Ser). Is also able to aminoacylate tRNA(Sec) with serine, to form the misacylated tRNA L-seryl-tRNA(Sec), which will be further converted into selenocysteinyl-tRNA(Sec). In Nocardioides sp. (strain ATCC BAA-499 / JS614), this protein is Serine--tRNA ligase.